Reading from the N-terminus, the 124-residue chain is Small ribosomal subunit protein uS12 (124 aa).

3-methylthioaspartic acid is present on Asp89. The disordered stretch occupies residues 101-124 (TLDTSGVKDRRQSRSKYGAKAPKE).

Belongs to the universal ribosomal protein uS12 family. In terms of assembly, part of the 30S ribosomal subunit. Contacts proteins S8 and S17. May interact with IF1 in the 30S initiation complex.

With S4 and S5 plays an important role in translational accuracy. Its function is as follows. Interacts with and stabilizes bases of the 16S rRNA that are involved in tRNA selection in the A site and with the mRNA backbone. Located at the interface of the 30S and 50S subunits, it traverses the body of the 30S subunit contacting proteins on the other side and probably holding the rRNA structure together. The combined cluster of proteins S8, S12 and S17 appears to hold together the shoulder and platform of the 30S subunit. This chain is Small ribosomal subunit protein uS12, found in Synechococcus sp. (strain CC9902).